A 379-amino-acid chain; its full sequence is UDP-4-amino-4-deoxy-L-arabinose--oxoglutarate aminotransferase (379 aa).

Lys-182 is subject to N6-(pyridoxal phosphate)lysine.

The protein belongs to the DegT/DnrJ/EryC1 family. ArnB subfamily. In terms of assembly, homodimer. Pyridoxal 5'-phosphate is required as a cofactor.

It catalyses the reaction UDP-4-amino-4-deoxy-beta-L-arabinose + 2-oxoglutarate = UDP-beta-L-threo-pentopyranos-4-ulose + L-glutamate. The protein operates within nucleotide-sugar biosynthesis; UDP-4-deoxy-4-formamido-beta-L-arabinose biosynthesis; UDP-4-deoxy-4-formamido-beta-L-arabinose from UDP-alpha-D-glucuronate: step 2/3. Its pathway is bacterial outer membrane biogenesis; lipopolysaccharide biosynthesis. Functionally, catalyzes the conversion of UDP-4-keto-arabinose (UDP-Ara4O) to UDP-4-amino-4-deoxy-L-arabinose (UDP-L-Ara4N). The modified arabinose is attached to lipid A and is required for resistance to polymyxin and cationic antimicrobial peptides. This is UDP-4-amino-4-deoxy-L-arabinose--oxoglutarate aminotransferase from Salmonella schwarzengrund (strain CVM19633).